Reading from the N-terminus, the 205-residue chain is ATP-dependent Clp protease proteolytic subunit (205 aa).

Catalysis depends on Ser-109, which acts as the Nucleophile. The active site involves His-134.

This sequence belongs to the peptidase S14 family. In terms of assembly, fourteen ClpP subunits assemble into 2 heptameric rings which stack back to back to give a disk-like structure with a central cavity, resembling the structure of eukaryotic proteasomes.

It is found in the cytoplasm. The catalysed reaction is Hydrolysis of proteins to small peptides in the presence of ATP and magnesium. alpha-casein is the usual test substrate. In the absence of ATP, only oligopeptides shorter than five residues are hydrolyzed (such as succinyl-Leu-Tyr-|-NHMec, and Leu-Tyr-Leu-|-Tyr-Trp, in which cleavage of the -Tyr-|-Leu- and -Tyr-|-Trp bonds also occurs).. Cleaves peptides in various proteins in a process that requires ATP hydrolysis. Has a chymotrypsin-like activity. Plays a major role in the degradation of misfolded proteins. The protein is ATP-dependent Clp protease proteolytic subunit of Buchnera aphidicola subsp. Baizongia pistaciae (strain Bp).